The chain runs to 332 residues: Tetraacyldisaccharide 4'-kinase (332 aa).

Position 60-67 (60-67 (TVGGTGKT)) interacts with ATP.

The protein belongs to the LpxK family.

The enzyme catalyses a lipid A disaccharide + ATP = a lipid IVA + ADP + H(+). It functions in the pathway glycolipid biosynthesis; lipid IV(A) biosynthesis; lipid IV(A) from (3R)-3-hydroxytetradecanoyl-[acyl-carrier-protein] and UDP-N-acetyl-alpha-D-glucosamine: step 6/6. In terms of biological role, transfers the gamma-phosphate of ATP to the 4'-position of a tetraacyldisaccharide 1-phosphate intermediate (termed DS-1-P) to form tetraacyldisaccharide 1,4'-bis-phosphate (lipid IVA). This Pseudomonas paraeruginosa (strain DSM 24068 / PA7) (Pseudomonas aeruginosa (strain PA7)) protein is Tetraacyldisaccharide 4'-kinase.